The following is a 115-amino-acid chain: Large ribosomal subunit protein uL22 (115 aa).

It belongs to the universal ribosomal protein uL22 family. As to quaternary structure, part of the 50S ribosomal subunit.

Its function is as follows. This protein binds specifically to 23S rRNA; its binding is stimulated by other ribosomal proteins, e.g. L4, L17, and L20. It is important during the early stages of 50S assembly. It makes multiple contacts with different domains of the 23S rRNA in the assembled 50S subunit and ribosome. The globular domain of the protein is located near the polypeptide exit tunnel on the outside of the subunit, while an extended beta-hairpin is found that lines the wall of the exit tunnel in the center of the 70S ribosome. The chain is Large ribosomal subunit protein uL22 from Ligilactobacillus salivarius (strain UCC118) (Lactobacillus salivarius).